We begin with the raw amino-acid sequence, 654 residues long: Interferon-induced GTP-binding protein Mx1 (654 aa).

The residue at position 1 (methionine 1) is an N-acetylmethionine. 2 stretches are compositionally biased toward basic and acidic residues: residues methionine 1–aspartate 12 and aspartate 23–serine 32. Residues methionine 1–lysine 33 form a disordered region. The 274-residue stretch at aspartate 62–proline 335 folds into the Dynamin-type G domain. Positions glycine 72–serine 79 are G1 motif. Residue glycine 72–serine 79 participates in GTP binding. Positions valine 97–arginine 99 are G2 motif. Residues aspartate 173–glycine 176 form a G3 motif region. Residues aspartate 173–isoleucine 177 and threonine 242–aspartate 245 contribute to the GTP site. The segment at threonine 242–aspartate 245 is G4 motif. Positions lysine 274–glycine 277 are G5 motif. The bundle signaling element (BSE) stretch occupies residues leucine 336–glutamate 361. The middle domain stretch occupies residues glutamate 361 to cysteine 528. The tract at residues glutamate 362–glutamate 624 is stalk. The tract at residues glutamate 544–glutamate 563 is disordered. Positions lysine 549–lysine 552 are critical for lipid-binding. One can recognise a GED domain in the interval threonine 566–glycine 654.

The protein belongs to the TRAFAC class dynamin-like GTPase superfamily. Dynamin/Fzo/YdjA family. As to quaternary structure, homooligomer. Oligomerizes into multimeric filamentous or ring-like structures by virtue of its stalk domain. Oligomerization is critical for GTPase activity, protein stability, and recognition of viral target structures. Interacts with TRPC1, TRPC3, TRPC4, TRPC5, TRPC6 and TRPC7. Interacts with HSPA5. Interacts with DDX39A and DDX39B. Interacts with TUBB/TUBB5. Post-translationally, ISGylated.

Its subcellular location is the cytoplasm. The protein localises to the endoplasmic reticulum membrane. It localises to the perinuclear region. In terms of biological role, interferon-induced dynamin-like GTPase with antiviral activity. This Ovis aries (Sheep) protein is Interferon-induced GTP-binding protein Mx1 (MX1).